The primary structure comprises 877 residues: Clumping factor B (877 aa).

Residues 1-44 (MKKRIDYLSNKQNKYSIRRFTVGTTSVIVGATILFGIGNHQAQA) form the signal peptide. A YSIRK-G/S signaling motif motif is present at residues 15-26 (YSIRRFTVGTTS). Polar residues-rich tracts occupy residues 44–61 (ASEQSNDTTQSSKNNASA) and 68–95 (MIETPQLNTTANDTSDISANTNSANVDS). The tract at residues 44–192 (ASEQSNDTTQ…QGTSKPSVRT (149 aa)) is disordered. The tract at residues 45–542 (SEQSNDTTQS…GSADGDSAVN (498 aa)) is ligand binding A region. Low complexity predominate over residues 96–119 (TTKPMSTQTSNTTTTEPASTNETP). Over residues 120 to 189 (QPTAIKNQAT…SNAQGTSKPS (70 aa)) the composition is skewed to polar residues. An MIDAS-like motif motif is present at residues 272 to 276 (DYSNS). The disordered stretch occupies residues 530 to 849 (YGGGSADGDS…ETGDKSENTN (320 aa)). Pro residues predominate over residues 545 to 555 (DPTPGPPVDPE). The segment covering 556–801 (PSPDPEPEPT…SDSDSDSDSD (246 aa)) has biased composition (acidic residues). The segment covering 805-816 (RVTPPNNEQKAP) has biased composition (polar residues). Basic and acidic residues predominate over residues 833-846 (HKTDALPETGDKSE). The LPXTG sorting signal signature appears at 838–842 (LPETG). Thr841 is subject to Pentaglycyl murein peptidoglycan amidated threonine. The propeptide at 842–877 (GDKSENTNATLFGAMMALLGSLLLFRKRKQDHKEKA) is removed by sortase.

It belongs to the serine-aspartate repeat-containing protein (SDr) family. Post-translationally, proteolytically cleaved by aureolysin (aur). This cleavage leads to the inactivation of ClfB.

The protein localises to the secreted. It is found in the cell wall. Cell surface-associated protein implicated in virulence by promoting bacterial attachment to both alpha- and beta-chains of human fibrinogen and inducing the formation of bacterial clumps. Partly responsible for mediating bacterial attachment to the highly keratinized squamous epithelial cells from the nasal cavity via an interaction with cytokeratin K10 (K10). Also promotes bacterial attachment to cultured keratinocytes, possibly through an interaction with cytokeratin K10. Binds mouse cytokeratin K10. Activates human platelet aggregation. The polypeptide is Clumping factor B (clfB) (Staphylococcus aureus (strain NCTC 8325 / PS 47)).